A 194-amino-acid chain; its full sequence is Acid tolerance regulatory protein ActR (194 aa).

The 115-residue stretch at 24 to 138 (SLLIVDDDTA…DILAALIQRP (115 aa)) folds into the Response regulatory domain. Residue Asp-73 is modified to 4-aspartylphosphate.

Post-translationally, phosphorylated by ActS.

Its function is as follows. Member of the two-component regulatory system ActS/ActR acting in acid tolerance. These data implicate that a two-component sensor may be involved in pH sensing and/or response. This Sinorhizobium medicae (strain WSM419) (Ensifer medicae) protein is Acid tolerance regulatory protein ActR (actR).